A 501-amino-acid polypeptide reads, in one-letter code: Phenylalanine--tRNA ligase alpha subunit (501 aa).

2 residues coordinate L-phenylalanine: Thr-340 and Phe-423. Glu-425 contacts Mg(2+). Residue Phe-448 coordinates L-phenylalanine.

It belongs to the class-II aminoacyl-tRNA synthetase family. Phe-tRNA synthetase alpha subunit type 2 subfamily. Tetramer of two alpha and two beta subunits. The cofactor is Mg(2+).

Its subcellular location is the cytoplasm. The catalysed reaction is tRNA(Phe) + L-phenylalanine + ATP = L-phenylalanyl-tRNA(Phe) + AMP + diphosphate + H(+). The protein is Phenylalanine--tRNA ligase alpha subunit of Methanococcus maripaludis (strain C7 / ATCC BAA-1331).